The chain runs to 273 residues: ATP synthase subunit delta (273 aa).

Belongs to the ATPase delta chain family. In terms of assembly, F-type ATPases have 2 components, F(1) - the catalytic core - and F(0) - the membrane proton channel. F(1) has five subunits: alpha(3), beta(3), gamma(1), delta(1), epsilon(1). F(0) has three main subunits: a(1), b(2) and c(10-14). The alpha and beta chains form an alternating ring which encloses part of the gamma chain. F(1) is attached to F(0) by a central stalk formed by the gamma and epsilon chains, while a peripheral stalk is formed by the delta and b chains.

The protein localises to the cell membrane. F(1)F(0) ATP synthase produces ATP from ADP in the presence of a proton or sodium gradient. F-type ATPases consist of two structural domains, F(1) containing the extramembraneous catalytic core and F(0) containing the membrane proton channel, linked together by a central stalk and a peripheral stalk. During catalysis, ATP synthesis in the catalytic domain of F(1) is coupled via a rotary mechanism of the central stalk subunits to proton translocation. In terms of biological role, this protein is part of the stalk that links CF(0) to CF(1). It either transmits conformational changes from CF(0) to CF(1) or is implicated in proton conduction. In Streptomyces avermitilis (strain ATCC 31267 / DSM 46492 / JCM 5070 / NBRC 14893 / NCIMB 12804 / NRRL 8165 / MA-4680), this protein is ATP synthase subunit delta.